Reading from the N-terminus, the 100-residue chain is MIREERLLKVILAPHISEKSTVVAEKTNTVVFRVAIDATKSEIKAAVEKLFEVEVAGVRTLINKGKTKRHGARVGRRSDWKKAYVTLAAGADIDFVGAEA.

It belongs to the universal ribosomal protein uL23 family. Part of the 50S ribosomal subunit. Contacts protein L29, and trigger factor when it is bound to the ribosome.

One of the early assembly proteins it binds 23S rRNA. One of the proteins that surrounds the polypeptide exit tunnel on the outside of the ribosome. Forms the main docking site for trigger factor binding to the ribosome. This is Large ribosomal subunit protein uL23 from Shewanella amazonensis (strain ATCC BAA-1098 / SB2B).